Here is a 766-residue protein sequence, read N- to C-terminus: Polyribonucleotide nucleotidyltransferase (766 aa).

Mg(2+) is bound by residues Asp-490 and Asp-496. One can recognise a KH domain in the interval 557–616 (PKIDTITIPVDKIKVVIGKGGEQIDKIIAETGVKIDIDDEGLCSIFSSDQSAIDRAKEII). Positions 626-694 (GEVYEAKVVR…DKGRVDASMR (69 aa)) constitute an S1 motif domain. Basic and acidic residues-rich tracts occupy residues 700 to 734 (PEGYVEPERKPRERRDNKDRRNGNGFDRRNNDRNN) and 744 to 766 (FELRERKSHVDHEFPELSTKKPE). A disordered region spans residues 700-766 (PEGYVEPERK…FPELSTKKPE (67 aa)).

Belongs to the polyribonucleotide nucleotidyltransferase family. It depends on Mg(2+) as a cofactor.

The protein resides in the cytoplasm. The catalysed reaction is RNA(n+1) + phosphate = RNA(n) + a ribonucleoside 5'-diphosphate. Its function is as follows. Involved in mRNA degradation. Catalyzes the phosphorolysis of single-stranded polyribonucleotides processively in the 3'- to 5'-direction. The protein is Polyribonucleotide nucleotidyltransferase of Lactococcus lactis subsp. cremoris (strain MG1363).